The following is a 235-amino-acid chain: MQKQEKIIEMFNQIAPTYDKANRILSFGADVVWRKKACQRVMSLYLKKDLKIADIACGTGDMIEIWQESALKMEKNILNIKGIDPSSGMLNVAKEKFPNVEFIEAGAQNLPLESQSLDILSISYGIRNVVERQKALSEFARVLQKGGILVVLEFTKREKGGFIAACRDFYLKNILPSIGGIISKNKSAYEYLPNSIEGFLSKEEFILELKNAGFEMLDYKSFSFGVSSMFIAKKL.

Threonine 59, aspartate 84, and serine 123 together coordinate S-adenosyl-L-methionine.

It belongs to the class I-like SAM-binding methyltransferase superfamily. MenG/UbiE family.

It catalyses the reaction a 2-demethylmenaquinol + S-adenosyl-L-methionine = a menaquinol + S-adenosyl-L-homocysteine + H(+). The catalysed reaction is a 2-methoxy-6-(all-trans-polyprenyl)benzene-1,4-diol + S-adenosyl-L-methionine = a 5-methoxy-2-methyl-3-(all-trans-polyprenyl)benzene-1,4-diol + S-adenosyl-L-homocysteine + H(+). It functions in the pathway quinol/quinone metabolism; menaquinone biosynthesis; menaquinol from 1,4-dihydroxy-2-naphthoate: step 2/2. It participates in cofactor biosynthesis; ubiquinone biosynthesis. In terms of biological role, methyltransferase required for the conversion of demethylmenaquinol (DMKH2) to menaquinol (MKH2) and the conversion of 2-polyprenyl-6-methoxy-1,4-benzoquinol (DDMQH2) to 2-polyprenyl-3-methyl-6-methoxy-1,4-benzoquinol (DMQH2). This is Ubiquinone/menaquinone biosynthesis C-methyltransferase UbiE from Campylobacter jejuni subsp. jejuni serotype O:6 (strain 81116 / NCTC 11828).